The primary structure comprises 123 residues: Polyadenylate-binding protein-interacting protein 2B (123 aa).

Met-1 is subject to N-acetylmethionine. Over residues 1–13 the composition is skewed to polar residues; sequence MNGSNMANTSPSV. 2 disordered regions span residues 1–30 and 91–123; these read MNGS…KENP and NGLS…GEKY. Composition is skewed to basic and acidic residues over residues 14–30 and 113–123; these read KSKE…KENP and DAKEFIPGEKY.

It belongs to the PAIP2 family. As to quaternary structure, interacts (via central acidic portion and C-terminus) with PABPC1 (via the second and third RRM domains and the C-terminus). In terms of processing, ubiquitinated in vitro. Expressed in brain, cervix, heart, liver, ovary, kidney, prostate and testis.

In terms of biological role, inhibits translation of capped and polyadenylated mRNAs by displacing PABPC1 from the poly(A) tail. The polypeptide is Polyadenylate-binding protein-interacting protein 2B (PAIP2B) (Homo sapiens (Human)).